Reading from the N-terminus, the 1162-residue chain is MELNAYIGRAGTGKSHHMIDNIKQQMKEDPLGDPIVLIAPTQSTFQLEQAFVNDKELNGSLRTEVLHFERLSYRVFQEVGGLTEERLTQAATEMMIYDLVQQHKSELKLYQSQVNYYGFSEKLSEQIQDFKKYSVTPEHLHTFLQDNDLKTRTRHKLEDISLIYQYFEERINGEFITSEDSLNHFIDILSQSEWIKRAEVYIDGFHNFSTLEYQIIKALVQSAKKVTVLLTTDGNEDPFSLFRKPSEVLTHLKEIAKDLNIELQQQFFKQQYRFNNKDLIQLEQQFDALQINPIAYDGSINILESSSIREEVNEVARQIIKDTRDKQYRYQDIAILYRDEAYAYLFDSVLPQYDIPFNIDTKRSMTHHPIMEMVRSLLEVIQTNWNISPMMRLIKTNILTNHFKDSAYLIDLLENFVVERGVYGKRWLDEKLFSIDNFTKMGRKEHKLTTEEREDFEQVVHLKNDIIDKILTFEKAMNEAENVRGFATAFYETMEAFDLPKYLMTHRDQLDVDGRHEEAEEIDQIWNGLIQILDDLVTVFDNEEMTLKRFLEVFDIGLEQLEFVMIPQTLDQVSIGTMDLAKVDNKKHIYMVGMNDGAMPQPVSSSSLITDEEKKVFEQQAQVELSPTSDILQMDEAFVCYIAMTRGSEQVTFSYSLMGAQGEDKEKSPFIDQIQGLFNGLEVMNIHYQHNAQPLSLMEHPHQTKVVLFESLKAWLEAEMVADVWVDAYQVMRDNDKLNNGLEYLLTALTYDNETVKLDEPLAASLYGSTINASVSRFEGYNDCPFKHYANHGLRLNERTKYKLENFDLGNIFHTALKYISDKVDGDFKNLDNKKIHALTVEALENVLPQVQFNLMDSNAYYRYVSKRIGVIVESTLKALRYQNKNTKFKPQRFEAGFRKTPNNSEELIAQPLITKQGIPVNIRGQIDRIDAYTKDDKSYINIIDYKSSNPSAKLDLKKVYYGKQMQMMTYMDIALQNAQRLGLSNEIKPGGLLYFHVHDERLSFKDWGELEDDALTQDKLEQAFLKEYKLRGLVNSDMDVVDALDIRLEEIGKSDIVPVSLKKDGSIGSRGSSVADETTIHKFIKHNKDNFIKTATNIMEGHTEVAPLKFDDQLPCQFCNFQSVCHVDTIIDSKHYRHVEETIDPIKAIQDVELESGDHNE.

The 275-residue stretch at 1–275 (MELNAYIGRA…QFFKQQYRFN (275 aa)) folds into the UvrD-like helicase ATP-binding domain. 8–15 (GRAGTGKS) is an ATP binding site. The region spanning 269 to 583 (KQQYRFNNKD…SIGTMDLAKV (315 aa)) is the UvrD-like helicase C-terminal domain. The [4Fe-4S] cluster site is built by C784, C1117, C1120, and C1126.

This sequence belongs to the helicase family. AddB/RexB type 1 subfamily. In terms of assembly, heterodimer of AddA and AddB. It depends on Mg(2+) as a cofactor. The cofactor is [4Fe-4S] cluster.

In terms of biological role, the heterodimer acts as both an ATP-dependent DNA helicase and an ATP-dependent, dual-direction single-stranded exonuclease. Recognizes the chi site generating a DNA molecule suitable for the initiation of homologous recombination. The AddB subunit has 5' -&gt; 3' nuclease activity but not helicase activity. The chain is ATP-dependent helicase/deoxyribonuclease subunit B from Staphylococcus haemolyticus (strain JCSC1435).